The following is a 1651-amino-acid chain: Roundabout homolog 1 (1651 aa).

Positions 1–25 (MKWKHLPLLVMISLLTLSKKHLLLA) are cleaved as a signal peptide. Topologically, residues 26-897 (QLIPDPEDLE…QQISDVVKQP (872 aa)) are extracellular. The disordered stretch occupies residues 31–66 (PEDLERGNDNGTPAPTSDNDDNSLGYTGSRLRQEDF). Residues 39–56 (DNGTPAPTSDNDDNSLGY) are compositionally biased toward polar residues. Ig-like C2-type domains follow at residues 68–164 (PRIV…ASLE), 170–257 (DDFR…ADVT), 262–346 (PSFV…ATLT), 351–446 (PHFV…LEVT), and 455–541 (PVIR…AYIE). A disulfide bond links Cys-89 and Cys-147. N-linked (GlcNAc...) asparagine glycosylation is present at Asn-160. 3 disulfides stabilise this stretch: Cys-191–Cys-240, Cys-283–Cys-330, and Cys-372–Cys-428. Asn-463 carries an N-linked (GlcNAc...) asparagine glycan. A disulfide bridge connects residues Cys-476 and Cys-525. 3 consecutive Fibronectin type-III domains span residues 563 to 657 (APSK…TQDV), 676 to 773 (VVLH…TLEE), and 778 to 874 (PPRS…LDSH). Asn-790, Asn-820, and Asn-827 each carry an N-linked (GlcNAc...) asparagine glycan. The chain crosses the membrane as a helical span at residues 898–918 (AFIAGIGAACWIILMVFSIWL). At 919–1651 (YRHRKKRNGL…NNEELEETES (733 aa)) the chain is on the cytoplasmic side. Position 940 is a phosphoserine (Ser-940). Thr-948 is subject to Phosphothreonine. A Phosphotyrosine modification is found at Tyr-1038. Residue Ser-1055 is modified to Phosphoserine. Tyr-1073 bears the Phosphotyrosine mark. Residues 1086 to 1107 (NMNNGGGDSSEKHWKPPGQQKQ) form a disordered region. Tyr-1114 carries the phosphotyrosine modification. Disordered regions lie at residues 1137–1337 (PYNH…ADME), 1352–1397 (EQTP…DGSF), and 1420–1651 (RRQM…ETES). The segment covering 1147 to 1163 (GGSYNSSDRGSSTSGSQ) has biased composition (low complexity). Pro residues predominate over residues 1186 to 1196 (LPPPPAHPPPH). Thr-1240 is subject to Phosphothreonine. Polar residues predominate over residues 1255-1269 (YSHQSTATLTPSPQE). The span at 1281-1293 (DLGHMPHPPDRRR) shows a compositional bias: basic and acidic residues. A compositionally biased stretch (pro residues) spans 1296-1307 (VSPPPPPRPISP). At Ser-1297 the chain carries Phosphoserine. Positions 1322-1336 (MDTDAPEEEEDEADM) are enriched in acidic residues. Residues 1384–1397 (SSGRSSVSSSDGSF) show a composition bias toward low complexity. A compositionally biased stretch (polar residues) spans 1438 to 1451 (PRPTSPVSTDSNMS). Residues 1459–1470 (RPTKKQKHQPGH) are compositionally biased toward basic residues. Over residues 1480-1490 (LPPPPVPPPAI) the composition is skewed to pro residues. 2 stretches are compositionally biased toward basic and acidic residues: residues 1516–1541 (ARAD…RQVT) and 1549–1573 (DPRE…RDLP). Positions 1592-1601 (FPTSNNPRDP) are enriched in polar residues. Low complexity predominate over residues 1602–1614 (SSSSSMSSRGSGS). Over residues 1642 to 1651 (NNEELEETES) the composition is skewed to acidic residues.

This sequence belongs to the immunoglobulin superfamily. ROBO family. As to quaternary structure, homodimer. Dimerization is mediated by the extracellular domain and is independent of SLIT liganding. Interacts with SLIT1. Interacts with SLIT2. Interacts with FLRT3. Interacts with MYO9B (via Rho-GAP domain). Post-translationally, ubiquitinated. May be deubiquitinated by USP33. In terms of tissue distribution, expressed in embryonal brain and spinal cord.

It localises to the cell membrane. The protein localises to the cell projection. Its subcellular location is the axon. It is found in the endoplasmic reticulum-Golgi intermediate compartment membrane. Its function is as follows. Receptor for SLIT1 and SLIT2 that mediates cellular responses to molecular guidance cues in cellular migration, including axonal navigation at the ventral midline of the neural tube and projection of axons to different regions during neuronal development. Interaction with the intracellular domain of FLRT3 mediates axon attraction towards cells expressing NTN1. In axon growth cones, the silencing of the attractive effect of NTN1 by SLIT2 may require the formation of a ROBO1-DCC complex. Plays a role in the regulation of cell migration via its interaction with MYO9B; inhibits MYO9B-mediated stimulation of RHOA GTPase activity, and thereby leads to increased levels of active, GTP-bound RHOA. May be required for lung development. This Rattus norvegicus (Rat) protein is Roundabout homolog 1 (Robo1).